We begin with the raw amino-acid sequence, 502 residues long: 4-hydroxy-3-methylbut-2-enyl diphosphate reductase, chloroplastic (502 aa).

A chloroplast-targeting transit peptide spans 1 to 48 (MQVLPQTRVQGVPSGRNLSCSKAVGGTPLRALTRDVVRPARSVNVHVV). [4Fe-4S] cluster is bound at residue Cys-140. His-170 provides a ligand contact to (2E)-4-hydroxy-3-methylbut-2-enyl diphosphate. Cys-232 contributes to the [4Fe-4S] cluster binding site. His-260 contributes to the (2E)-4-hydroxy-3-methylbut-2-enyl diphosphate binding site. The Proton donor role is filled by Glu-262. Thr-325 contacts (2E)-4-hydroxy-3-methylbut-2-enyl diphosphate. Cys-363 lines the [4Fe-4S] cluster pocket. (2E)-4-hydroxy-3-methylbut-2-enyl diphosphate contacts are provided by residues 398–400 (SSN) and Ser-461.

This sequence belongs to the IspH family. In terms of assembly, homodimer. The cofactor is [4Fe-4S] cluster.

The protein localises to the plastid. The protein resides in the chloroplast stroma. The enzyme catalyses dimethylallyl diphosphate + 2 oxidized [2Fe-2S]-[ferredoxin] + H2O = (2E)-4-hydroxy-3-methylbut-2-enyl diphosphate + 2 reduced [2Fe-2S]-[ferredoxin] + 2 H(+). The catalysed reaction is isopentenyl diphosphate + 2 oxidized [2Fe-2S]-[ferredoxin] + H2O = (2E)-4-hydroxy-3-methylbut-2-enyl diphosphate + 2 reduced [2Fe-2S]-[ferredoxin] + 2 H(+). It participates in isoprenoid biosynthesis; dimethylallyl diphosphate biosynthesis; dimethylallyl diphosphate from (2E)-4-hydroxy-3-methylbutenyl diphosphate: step 1/1. It functions in the pathway isoprenoid biosynthesis; isopentenyl diphosphate biosynthesis via DXP pathway; isopentenyl diphosphate from 1-deoxy-D-xylulose 5-phosphate: step 6/6. Functionally, enzyme of the plastid non-mevalonate pathway for isoprenoid biosynthesis that converts 1-hydroxy-2-methyl-2-(E)-butenyl 4-diphosphate into isopentenyl diphosphate (IPP) and dimethylallyl diphosphate (DMAPP). The sequence is that of 4-hydroxy-3-methylbut-2-enyl diphosphate reductase, chloroplastic from Botryococcus braunii (Green alga).